We begin with the raw amino-acid sequence, 461 residues long: Argininosuccinate lyase (461 aa).

The protein belongs to the lyase 1 family. Argininosuccinate lyase subfamily.

It localises to the cytoplasm. The enzyme catalyses 2-(N(omega)-L-arginino)succinate = fumarate + L-arginine. It functions in the pathway amino-acid biosynthesis; L-arginine biosynthesis; L-arginine from L-ornithine and carbamoyl phosphate: step 3/3. The chain is Argininosuccinate lyase from Nitrosomonas eutropha (strain DSM 101675 / C91 / Nm57).